Consider the following 131-residue polypeptide: Glycine cleavage system H protein (131 aa).

The 83-residue stretch at 24-106 folds into the Lipoyl-binding domain; it reads TVRVGITDYA…YGEGWLVELQ (83 aa). Lys65 carries the post-translational modification N6-lipoyllysine.

Belongs to the GcvH family. In terms of assembly, the glycine cleavage system is composed of four proteins: P, T, L and H. Requires (R)-lipoate as cofactor.

Functionally, the glycine cleavage system catalyzes the degradation of glycine. The H protein shuttles the methylamine group of glycine from the P protein to the T protein. In Mycolicibacterium vanbaalenii (strain DSM 7251 / JCM 13017 / BCRC 16820 / KCTC 9966 / NRRL B-24157 / PYR-1) (Mycobacterium vanbaalenii), this protein is Glycine cleavage system H protein.